Consider the following 395-residue polypeptide: MEPRIDGGVFIGGIGNSGNEMCSNGVPALGVSSQTEIKVEKVQHTWTVKNFSHCYQEYLENFVYLQRGDEQLTWSIKIYPKGNGENNKDFVFLCLNRVINNNVKAGKIGFKSQFKLRTAENKDIEMRIHPNPSHSDYVSYIKRDVLFPQIMPRDMIIVNVEIDVAVETITTTNEPIQFEPTNSEQQLIEDYQRLFSQELLCDFAINVNGKIIRAHKAVLAARSPVFNAMLTHQDTDEAKSSMMYINDMDYDVIYEMVYYIYCGRCNKDITDMATALLIAADKYRLEELKSHCEKYLVENINIENACSLLIIGDLYSAPKLRKRAVTYILARPKNVTGTPGWEDILKGHPNLITDIFSQIDRQSSTGATSSVSNLPGVPMDIPGITGNIVPPPSGL.

The 122-residue stretch at 41 to 162 (KVQHTWTVKN…RDMIIVNVEI (122 aa)) folds into the MATH domain. Positions 201-269 (CDFAINVNGK…IYCGRCNKDI (69 aa)) constitute a BTB domain.

As to quaternary structure, interacts (via BTB domain) with cul-3. Seems to be a component of a E3 ubiquitin-protein ligase complex containing cul-3. Interacts (probably via MATH domain) with mei-1, which targets mei-1 for ubiquitin-mediated proteolysis. Interacts (probably via MATH domain) with ppfr-1, the regulatory subunit of the PP4 complex; targets ppfr-1 for ubiquitin-mediated proteolysis. May interact (via MATH domain) with unc-89 (via Ig-like C2-type domain 2/3 and, Ig-like C2-type domain 50 and fibronectin type-III domain 2). In terms of tissue distribution, expressed in body wall muscles.

It localises to the cytoplasm. It is found in the myofibril. The protein localises to the sarcomere. Its subcellular location is the m line. The protein resides in the i band. Its pathway is protein modification; protein ubiquitination. Probable substrate-specific adapter of an E3 ubiquitin-protein ligase complex which mediates the ubiquitination and subsequent proteasomal degradation of target proteins. Controls degradation of microtubule severing protein mei-1 after meiosis. Controls degradation of ppfr-1, the regulatory subunit of PP4 complex, after meiosis. In body wall muscles, involved in the organization of myosin thick filaments, likely by regulating the degradation of mei-1 downstream of unc-89. May also activate the TORC1 pathway. This chain is Protein maternal effect lethal 26 (mel-26), found in Caenorhabditis elegans.